A 401-amino-acid polypeptide reads, in one-letter code: Chorismate synthase (401 aa).

Residues Arg40 and Arg46 each contribute to the NADP(+) site. Residues 135 to 137 (RAS), 256 to 257 (QA), Gly300, 315 to 319 (KPIST), and Arg341 contribute to the FMN site.

The protein belongs to the chorismate synthase family. In terms of assembly, homotetramer. Requires FMNH2 as cofactor.

The enzyme catalyses 5-O-(1-carboxyvinyl)-3-phosphoshikimate = chorismate + phosphate. The protein operates within metabolic intermediate biosynthesis; chorismate biosynthesis; chorismate from D-erythrose 4-phosphate and phosphoenolpyruvate: step 7/7. Its function is as follows. Catalyzes the anti-1,4-elimination of the C-3 phosphate and the C-6 proR hydrogen from 5-enolpyruvylshikimate-3-phosphate (EPSP) to yield chorismate, which is the branch point compound that serves as the starting substrate for the three terminal pathways of aromatic amino acid biosynthesis. This reaction introduces a second double bond into the aromatic ring system. The polypeptide is Chorismate synthase (Mycobacterium bovis (strain BCG / Pasteur 1173P2)).